The following is a 382-amino-acid chain: Cytochrome b (382 aa).

4 helical membrane passes run 28 to 48 (YGFLLGIIFFIQILTGVFLAS), 72 to 94 (WCFRYMHATGASLVFLLTYLHIL), 107 to 127 (SWISGLIIFALFIVTAFIGYV), and 169 to 189 (FFVLHFILPFVALCIVFIHIF). Heme b is bound by residues histidine 78 and histidine 92. Histidine 173 and histidine 187 together coordinate heme b. A ubiquinone is bound at residue histidine 192. 4 helical membrane-spanning segments follow: residues 214–234 (LLSLDVKGFNNIFILFLLQSI), 274–294 (IPSKTAGLLIVLASLQLLFLL), 317–337 (VPMIWFMCSFYALLWIGCQLP), and 340–360 (IFILYGRLFIISFFSSGLFAL).

Belongs to the cytochrome b family. As to quaternary structure, the main subunits of complex b-c1 are: cytochrome b, cytochrome c1 and the Rieske protein. It depends on heme b as a cofactor.

The protein resides in the mitochondrion inner membrane. Functionally, component of the ubiquinol-cytochrome c reductase complex (complex III or cytochrome b-c1 complex) that is part of the mitochondrial respiratory chain. The b-c1 complex mediates electron transfer from ubiquinol to cytochrome c. Contributes to the generation of a proton gradient across the mitochondrial membrane that is then used for ATP synthesis. This Plasmodium vivax (strain Salvador I) protein is Cytochrome b (MT-CYB).